A 230-amino-acid polypeptide reads, in one-letter code: Probable cytokinin riboside 5'-monophosphate phosphoribohydrolase LOG4 (230 aa).

Substrate-binding positions include E91, 109 to 110, and 126 to 132; these read RK and GYGTIEE.

The protein belongs to the LOG family.

It catalyses the reaction N(6)-(dimethylallyl)adenosine 5'-phosphate + H2O = N(6)-dimethylallyladenine + D-ribose 5-phosphate. The enzyme catalyses 9-ribosyl-trans-zeatin 5'-phosphate + H2O = trans-zeatin + D-ribose 5-phosphate. Its function is as follows. Cytokinin-activating enzyme working in the direct activation pathway. Phosphoribohydrolase that converts inactive cytokinin nucleotides to the biologically active free-base forms. This Oryza sativa subsp. japonica (Rice) protein is Probable cytokinin riboside 5'-monophosphate phosphoribohydrolase LOG4 (LOGL4).